Here is a 119-residue protein sequence, read N- to C-terminus: Large ribosomal subunit protein bL19 (119 aa).

Belongs to the bacterial ribosomal protein bL19 family.

Its function is as follows. This protein is located at the 30S-50S ribosomal subunit interface and may play a role in the structure and function of the aminoacyl-tRNA binding site. This is Large ribosomal subunit protein bL19 from Limosilactobacillus reuteri (strain DSM 20016) (Lactobacillus reuteri).